A 172-amino-acid chain; its full sequence is Putative phosphoesterase BcerKBAB4_1135 (172 aa).

The Proton donor role is filled by His34. 2 consecutive short sequence motifs (HXTX) follow at residues 34–37 and 115–118; these read HITL and HLTI. His115 functions as the Proton acceptor in the catalytic mechanism.

The protein belongs to the 2H phosphoesterase superfamily. YjcG family.

This chain is Putative phosphoesterase BcerKBAB4_1135, found in Bacillus mycoides (strain KBAB4) (Bacillus weihenstephanensis).